The following is a 210-amino-acid chain: Ribonuclease HII (210 aa).

The region spanning Ser2 to Gln203 is the RNase H type-2 domain. Asp8, Glu9, and Asp99 together coordinate a divalent metal cation.

The protein belongs to the RNase HII family. Mn(2+) serves as cofactor. Requires Mg(2+) as cofactor.

It localises to the cytoplasm. It carries out the reaction Endonucleolytic cleavage to 5'-phosphomonoester.. Functionally, endonuclease that specifically degrades the RNA of RNA-DNA hybrids. This is Ribonuclease HII from Methanopyrus kandleri (strain AV19 / DSM 6324 / JCM 9639 / NBRC 100938).